Consider the following 160-residue polypeptide: Transcription elongation factor GreA (160 aa).

The stretch at 12-76 (EGVKKLEEEL…QLENMLKNAS (65 aa)) forms a coiled coil.

The protein belongs to the GreA/GreB family.

In terms of biological role, necessary for efficient RNA polymerase transcription elongation past template-encoded arresting sites. The arresting sites in DNA have the property of trapping a certain fraction of elongating RNA polymerases that pass through, resulting in locked ternary complexes. Cleavage of the nascent transcript by cleavage factors such as GreA or GreB allows the resumption of elongation from the new 3'terminus. GreA releases sequences of 2 to 3 nucleotides. This chain is Transcription elongation factor GreA, found in Clostridium botulinum (strain Hall / ATCC 3502 / NCTC 13319 / Type A).